A 329-amino-acid polypeptide reads, in one-letter code: Olfactory receptor 10J3 (329 aa).

Residues 1-26 (MPKLNSTFVTEFLFEGFSSFRRQHKL) are Extracellular-facing. N-linked (GlcNAc...) asparagine glycosylation is present at N5. The helical transmembrane segment at 27–47 (VFFVVFLTLYLLTLSGNVIIM) threads the bilayer. The Cytoplasmic portion of the chain corresponds to 48–55 (TIIRLDHH). A helical transmembrane segment spans residues 56-76 (LHTPMYFFLCMLSISETCYTV). Over 77–100 (AIIPHMLSGLLNPHQPIATQSCAT) the chain is Extracellular. An intrachain disulfide couples C98 to C190. Residues 101–121 (QLFFYLTFGINNCFLLTVMGY) traverse the membrane as a helical segment. Residues 122-140 (DRYVAICNPLRYSVIMGKR) lie on the Cytoplasmic side of the membrane. Residues 141–161 (ACIQLASGSLGIGLGMAIVQV) form a helical membrane-spanning segment. Residues 162 to 198 (TSVFGLPFCDAFVISHFFCDVRHLLKLACTDTTVNEI) lie on the Extracellular side of the membrane. The helical transmembrane segment at 199–218 (INFVVSVCVLVLPMGLVFIS) threads the bilayer. Topologically, residues 219–238 (YVLIISTILKIASAEGQKKA) are cytoplasmic. Residues 239-259 (FATCASHLTVVIIHYGCASII) form a helical membrane-spanning segment. Topologically, residues 260 to 272 (YLKPKSQSSLGQD) are extracellular. The helical transmembrane segment at 273 to 293 (RLISVTYTHHSPTEPCCVQPE) threads the bilayer. At 294–329 (EQGGQRCSAQSRGAKNSVSLMKRGCEGFSFAFINMY) the chain is on the cytoplasmic side.

Belongs to the G-protein coupled receptor 1 family.

Its subcellular location is the cell membrane. Its function is as follows. Odorant receptor. The polypeptide is Olfactory receptor 10J3 (OR10J3) (Homo sapiens (Human)).